Here is a 554-residue protein sequence, read N- to C-terminus: MATATVATTPEGIPVIILKEGSSRTYGKEALRANIAAVKAIEEALKSTYGPRGMDKMLVDSLGDITITNDGATILDKMDLQHPTGKLLVQIAKGQDEETADGTKTAVILAGELAKKAEDLLYKEIHPTIIVSGYKKAEEIALKTIQEIAQPVTINDTDVLRKVALTSLGSKAVAGAREYLADLVVKAVAQVAELRGDKWYVDLDNVQIVKKHGGSVNDTQLVYGIVVDKEVVHPGMPKRIENAKIALLDASLEVEKPELDAEIRINDPTQMHKFLEEEENILKEKVDKIAATGANVVICQKGIDEVAQHYLAKKGILAVRRAKKSDLEKLARATGGRVISNIDELTSQDLGYAALVEERKVGEDKMVFVEGAKNPKSVSILIRGGLERVVDETERALRDALGTVADVIRDGRAVAGGGAVEIEIAKRLRKYAPQVGGKEQLAIEAYANAIEGLIMILAENAGLDPIDKLMQLRSLHENETNKWYGLNLFTGNPEDMWKLGVIEPALVKMNAVKAATEAVTLVLRIDDIVAAGKKSGSEPSGKKEKDKEEKSSED.

Residues 532–554 (GKKSGSEPSGKKEKDKEEKSSED) are disordered. Over residues 540-554 (SGKKEKDKEEKSSED) the composition is skewed to basic and acidic residues.

The protein belongs to the TCP-1 chaperonin family. As to quaternary structure, forms a Heterooligomeric complex of two stacked eight-membered rings.

Molecular chaperone; binds unfolded polypeptides in vitro, and has a weak ATPase activity. This is Thermosome subunit beta (thsB) from Saccharolobus solfataricus (strain ATCC 35092 / DSM 1617 / JCM 11322 / P2) (Sulfolobus solfataricus).